The sequence spans 84 residues: Putative membrane protein insertion efficiency factor (84 aa).

Belongs to the UPF0161 family.

Its subcellular location is the cell inner membrane. Its function is as follows. Could be involved in insertion of integral membrane proteins into the membrane. In Shewanella amazonensis (strain ATCC BAA-1098 / SB2B), this protein is Putative membrane protein insertion efficiency factor.